We begin with the raw amino-acid sequence, 1464 residues long: Glutamate receptor ionotropic, NMDA 2A (1464 aa).

Residues 1–22 (MGRVGYWTLLVLPALLVWRGPA) form the signal peptide. The Extracellular segment spans residues 23–556 (PSAAAEKGPP…SAFLEPFSAS (534 aa)). A Zn(2+)-binding site is contributed by histidine 44. Asparagine 75 carries an N-linked (GlcNAc...) asparagine glycan. Residues cysteine 87 and cysteine 320 are joined by a disulfide bond. Zn(2+)-binding residues include histidine 128, glutamate 266, and aspartate 282. N-linked (GlcNAc...) asparagine glycans are attached at residues asparagine 340, asparagine 380, asparagine 443, and asparagine 444. 2 cysteine pairs are disulfide-bonded: cysteine 429-cysteine 455 and cysteine 436-cysteine 456. L-glutamate is bound by residues serine 511, threonine 513, and arginine 518. Asparagine 541 is a glycosylation site (N-linked (GlcNAc...) asparagine). Residues 557–576 (VWVMMFVMLLIVSAIAVFVF) form a helical membrane-spanning segment. At 577–600 (EYFSPVGYNRNLAKGKAPHGPSFT) the chain is on the cytoplasmic side. A pore-forming region spans residues 599–620 (FTIGKAIWLLWGLVFNNSVPVQ). Residues 601–615 (IGKAIWLLWGLVFNN) constitute an intramembrane region (discontinuously helical). Residues 616–625 (SVPVQNPKGT) lie on the Cytoplasmic side of the membrane. A helical transmembrane segment spans residues 626–646 (TSKIMVSVWAFFAVIFLASYT). Over 647–814 (ANLAAFMIQE…NEVMSSQLDI (168 aa)) the chain is Extracellular. N-linked (GlcNAc...) asparagine glycosylation occurs at asparagine 687. Residues serine 689, threonine 690, and aspartate 731 each coordinate L-glutamate. The cysteines at positions 745 and 800 are disulfide-linked. A helical membrane pass occupies residues 815-835 (DNMAGVFYMLAAAMALSLITF). At 836-1464 (IWEHLFYWKL…KKMPSIESDV (629 aa)) the chain is on the cytoplasmic side. Phosphoserine is present on residues serine 882, serine 890, and serine 929. Polar residues-rich tracts occupy residues 997–1010 (EVAVSTESKANSRP) and 1023–1032 (QDSLSQNPVS). The interval 997–1083 (EVAVSTESKA…PDNSKNHKTK (87 aa)) is disordered. A Phosphoserine modification is found at serine 1025. 2 stretches are compositionally biased toward basic and acidic residues: residues 1033–1043 (QRDEATAENRT) and 1052–1061 (LPEEMAHSDI). A phosphoserine mark is found at serine 1059 and serine 1062. A compositionally biased stretch (basic and acidic residues) spans 1070 to 1083 (CHREPDNSKNHKTK). Serine 1198 and serine 1291 each carry phosphoserine. Positions 1335 to 1372 (KLSGKKSSLFPQGLEDSKRSKSLLPDHTSDNPFLHSHR) are disordered. A PDZ-binding motif is present at residues 1462–1464 (SDV).

The protein belongs to the glutamate-gated ion channel (TC 1.A.10.1) family. NR2A/GRIN2A subfamily. Heterotetramer. Forms heterotetrameric channels composed of two GluN1/zeta subunits (GRIN1), and two identical GluN2/epsilon subunits (GRIN2A, GRIN2B, GRIN2C or GRIN2D) or GluN3 subunits (GRIN3A or GRIN3B) (in vitro). Can also form heterotetrameric channels that contain at least two GluN1 subunits and at least two different GluN2 subunits (or a combination of one GluN2 and one GluN3 subunits) (in vitro). In vivo, the subunit composition may depend on the expression levels of the different subunits. Found in a complex with GRIN1, GRIN3A and PPP2CB. Found in a complex with GRIN1 and GRIN3B. Interacts with AIP1. Interacts with HIP1 and NETO1. Interacts with SNX27 (via PDZ domain); the interaction is required for recycling to the plasma membrane when endocytosed and prevent degradation in lysosomes. Interacts with PDZ domains of PATJ and DLG4. Interacts with LRFN2. Interacts with RPH3A and DLG4; this ternary complex regulates NMDA receptor composition at postsynaptic membranes. Interacts with SORCS2. Interacts with ARC; preventing ARC oligomerization. Interacts (via the extreme C-terminus) with FRMPD2 (the second PDZ domain); the interaction is direct and is likely to promote NMDAR-mediated neural signal transmission. GRIN2A binds FRMPD2 with lower affinity than GRIN2B.

The protein resides in the cell projection. Its subcellular location is the dendritic spine. The protein localises to the cell membrane. It is found in the synapse. It localises to the postsynaptic cell membrane. The protein resides in the cytoplasmic vesicle membrane. The enzyme catalyses Ca(2+)(in) = Ca(2+)(out). The catalysed reaction is Na(+)(in) = Na(+)(out). It catalyses the reaction K(+)(in) = K(+)(out). NMDA glutamate receptor activity is inhibited by endogenous Mg(2+) in a voltage-dependent manner. NMDA glutamate receptor activity is inhibited by endogenous Zn(2+). NMDA glutamate receptor activity is inhibited by endogenous protons. In terms of biological role, component of N-methyl-D-aspartate (NMDA) receptors (NMDARs) that function as heterotetrameric, ligand-gated cation channels with high calcium permeability and voltage-dependent block by Mg(2+). NMDARs participate in synaptic plasticity for learning and memory formation by contributing to the slow phase of excitatory postsynaptic current, long-term synaptic potentiation, and learning. Channel activation requires binding of the neurotransmitter L-glutamate to the GluN2 subunit, glycine or D-serine binding to the GluN1 subunit, plus membrane depolarization to eliminate channel inhibition by Mg(2+). NMDARs mediate simultaneously the potasium efflux and the influx of calcium and sodium. Each GluN2 subunit confers differential attributes to channel properties, including activation, deactivation and desensitization kinetics, pH sensitivity, Ca2(+) permeability, and binding to allosteric modulators. Participates in the synaptic plasticity regulation through activation by the L-glutamate releaseed by BEST1, into the synaptic cleft, upon F2R/PAR-1 activation in astrocyte. The polypeptide is Glutamate receptor ionotropic, NMDA 2A (Homo sapiens (Human)).